A 186-amino-acid polypeptide reads, in one-letter code: dCTP deaminase (186 aa).

107–112 (KSTYAR) contributes to the dCTP binding site. Glu-133 functions as the Proton donor/acceptor in the catalytic mechanism. Gln-152, Tyr-166, and Gln-176 together coordinate dCTP.

The protein belongs to the dCTP deaminase family. In terms of assembly, homotrimer.

It carries out the reaction dCTP + H2O + H(+) = dUTP + NH4(+). It participates in pyrimidine metabolism; dUMP biosynthesis; dUMP from dCTP (dUTP route): step 1/2. Functionally, catalyzes the deamination of dCTP to dUTP. This chain is dCTP deaminase, found in Campylobacter jejuni subsp. jejuni serotype O:2 (strain ATCC 700819 / NCTC 11168).